The chain runs to 190 residues: Probable nicotinate-nucleotide adenylyltransferase (190 aa).

Belongs to the NadD family.

The catalysed reaction is nicotinate beta-D-ribonucleotide + ATP + H(+) = deamido-NAD(+) + diphosphate. Its pathway is cofactor biosynthesis; NAD(+) biosynthesis; deamido-NAD(+) from nicotinate D-ribonucleotide: step 1/1. In terms of biological role, catalyzes the reversible adenylation of nicotinate mononucleotide (NaMN) to nicotinic acid adenine dinucleotide (NaAD). This Azobacteroides pseudotrichonymphae genomovar. CFP2 protein is Probable nicotinate-nucleotide adenylyltransferase.